A 428-amino-acid polypeptide reads, in one-letter code: Ribosomal RNA small subunit methyltransferase B (428 aa).

S-adenosyl-L-methionine is bound by residues 253–259 (CAAPGGK), Asp276, Asp302, and Asp321. Residue Cys374 is the Nucleophile of the active site.

This sequence belongs to the class I-like SAM-binding methyltransferase superfamily. RsmB/NOP family.

The protein resides in the cytoplasm. It catalyses the reaction cytidine(967) in 16S rRNA + S-adenosyl-L-methionine = 5-methylcytidine(967) in 16S rRNA + S-adenosyl-L-homocysteine + H(+). Its function is as follows. Specifically methylates the cytosine at position 967 (m5C967) of 16S rRNA. The protein is Ribosomal RNA small subunit methyltransferase B of Citrobacter koseri (strain ATCC BAA-895 / CDC 4225-83 / SGSC4696).